A 276-amino-acid chain; its full sequence is Undecaprenyl-diphosphatase 1 (276 aa).

The next 7 membrane-spanning stretches (helical) occupy residues 4–24, 46–63, 83–103, 108–128, 187–207, 217–237, and 252–272; these read ILIC…FLPV, TFDV…CWEY, FTLN…LFEK, VLFS…IILW, VATE…TLYE, VDSL…AFVC, and VFAW…YSGW.

This sequence belongs to the UppP family.

The protein resides in the cell inner membrane. It catalyses the reaction di-trans,octa-cis-undecaprenyl diphosphate + H2O = di-trans,octa-cis-undecaprenyl phosphate + phosphate + H(+). Its function is as follows. Catalyzes the dephosphorylation of undecaprenyl diphosphate (UPP). Confers resistance to bacitracin. This chain is Undecaprenyl-diphosphatase 1, found in Burkholderia lata (strain ATCC 17760 / DSM 23089 / LMG 22485 / NCIMB 9086 / R18194 / 383).